A 73-amino-acid chain; its full sequence is Antimicrobial peptide TsAP-2 (73 aa).

A signal peptide spans 1-22; it reads MQIKHLITIFFLVLIVADHCHA. Lysine 39 bears the Lysine amide mark. The propeptide occupies 45–73; it reads EITSQIEQYRNLQKREAELENLLANLPVY.

This sequence belongs to the non-disulfide-bridged peptide (NDBP) superfamily. Short antimicrobial peptide (group 4) family. In terms of tissue distribution, expressed by the venom gland.

The protein resides in the secreted. Functionally, antimicrobial peptide. Has a high antibacterial activity against the Gram-positive bacterium S.aureus (MIC=5-17.30 uM), the methicillin-resistant S.aureus (MRSA) (MIC=17.30 uM), and E.faecalis (MIC=69.23 uM). Has antifungal activity against Candida spp. and one Cryptococcus neoformans strains with MICs values ranging from 6.25 to 100 uM. Also shows an inhibitory activity on C.albicans biofilms at high concentrations. Has a moderate hemolytic potency (18% at 20 uM). Also inhibits the growth of the five human cancer cell lines tested (the squamous carcinoma cell line H157 (IC(50)=4.1 uM), the lung adenocarcinoma cell line H838 (11.0 uM), the breast carcinoma cell line MCF-7 (6.4 uM), the androgen-independent prostate adenocarcinoma cell line PC3 (13.3 uM) and the glioblastoma cell line U251-MG (15.4 uM)). In the model of polymicrobial sepsis, it exhibits an antibiotic effect, reducing the levels of microorganisms in the infectious focus and the inflammatory responses in the lung and cecum of septic animals. The protein is Antimicrobial peptide TsAP-2 of Tityus serrulatus (Brazilian scorpion).